We begin with the raw amino-acid sequence, 430 residues long: uncharacterized protein (430 aa).

Positions 1-19 (MKILLFVVLFFNVLVGIYS) are cleaved as a signal peptide. N-linked (GlcNAc...) asparagine glycosylation is present at Asn-39. A disordered region spans residues 119–408 (LDPNSSPSPS…ELLEKNSDGN (290 aa)). Pro residues predominate over residues 124–168 (SPSPSPSPSPSPSPSPSPSPSPSPSPSPSPSPSPSPSPSPSPSPS). Low complexity-rich tracts occupy residues 169-253 (PSSS…TPSQ) and 263-285 (PTPT…TQTP). Positions 286-303 (ISSRPMSISTEKPSSSEE) are enriched in polar residues. The N-linked (GlcNAc...) asparagine glycan is linked to Asn-312. Over residues 316-325 (SEDKKKDSES) the composition is skewed to basic and acidic residues. The span at 326-370 (KSSQSESPSPSASASESESASESASASTSVSVSASPLPIMDSSSS) shows a compositional bias: low complexity. N-linked (GlcNAc...) asparagine glycosylation occurs at Asn-408.

The protein resides in the secreted. This is an uncharacterized protein from Dictyostelium discoideum (Social amoeba).